A 1311-amino-acid chain; its full sequence is Ubiquitin carboxyl-terminal hydrolase 36 (1311 aa).

Composition is skewed to low complexity over residues 120 to 134 (AAAATNNGNSNSAGS) and 156 to 174 (STPTTTTTQTSSSSTSSSS). Residues 120-189 (AAAATNNGNS…NPNELPKPKR (70 aa)) form a disordered region. The USP domain maps to 212 to 533 (AGMINVGNTC…NSYIMFYELD (322 aa)). The active-site Nucleophile is the cysteine 221. Residue histidine 492 is the Proton acceptor of the active site. Residues 546–575 (NGLRQLSNGHHHHQQQQQQHQQQQQQQPTV) are disordered. Low complexity predominate over residues 560-572 (QQQQQHQQQQQQQ). Serine 581 bears the Phosphoserine mark. Disordered stretches follow at residues 587–620 (TRFIGPQLPPGGLNGYAMTTTTTATNNTTNGHSQ), 640–1095 (KFQE…GCLN), and 1136–1311 (DHGD…QQQS). 3 stretches are compositionally biased toward low complexity: residues 605-616 (TTTTTATNNTTN), 660-716 (APAV…QQQQ), and 759-774 (TLTLTPTTTPTASTPT). A Phosphothreonine modification is found at threonine 767. A phosphoserine mark is found at serine 787 and serine 789. The segment covering 795–826 (SSGTPSSSTPTTTTTAAAAAASSPMQATAAAT) has biased composition (low complexity). A compositionally biased stretch (basic residues) spans 836–853 (ARKRSLPDHHHHHPHHHV). A compositionally biased stretch (polar residues) spans 869–879 (PATNFNSSSSK). The segment covering 880–889 (QKTDAIDEIF) has biased composition (basic and acidic residues). The span at 896–905 (NKKRINNKNQ) shows a compositional bias: basic residues. Over residues 910 to 920 (GDEEEDDEETL) the composition is skewed to acidic residues. Composition is skewed to low complexity over residues 925 to 942 (NNSSRLVSSSTNTSPTTN) and 950 to 979 (VSSSSSNSKNVSTSAAAAAATTSSSTSTSA). Pro residues predominate over residues 980–989 (PPSPKTPPSP). Serine 982 carries the phosphoserine modification. Phosphothreonine is present on threonine 985. Serine 988 carries the phosphoserine modification. Over residues 1006–1020 (DDDDDEEEEDEDDEE) the composition is skewed to acidic residues. The span at 1037-1050 (PFSSQQKPTPSPST) shows a compositional bias: low complexity. Serine 1047 is subject to Phosphoserine. Phosphothreonine is present on threonine 1050. The segment covering 1060–1081 (FNGTSSSTPHVGNGYQSEPSTP) has biased composition (polar residues). Composition is skewed to low complexity over residues 1154–1176 (VVTTTTTTTTTTKNTTKTLTADA) and 1204–1221 (TANGKSSGNSNNTTPGYN). A compositionally biased stretch (polar residues) spans 1246-1255 (QHASSSYRSN). Residues 1267 to 1276 (GGNGGGGSGG) show a composition bias toward gly residues.

It belongs to the peptidase C19 family. In terms of assembly, interacts with atms/PAF1, but not with CycT.

The protein localises to the nucleus. It is found in the nucleolus. It carries out the reaction Thiol-dependent hydrolysis of ester, thioester, amide, peptide and isopeptide bonds formed by the C-terminal Gly of ubiquitin (a 76-residue protein attached to proteins as an intracellular targeting signal).. Its function is as follows. Required for maintaining multiple types of adult stem cells, including male and female germline, epithelial follicle cell and intestinal stem cells. May function as a transcriptional repressor by continually deubiquiting histone H2B at the promoters of genes critical for cellular differentiation, thereby preventing histone H3 'Lys-4' trimethylation (H3K4). Controls selective autophagy activation by ubiquitinated proteins. The polypeptide is Ubiquitin carboxyl-terminal hydrolase 36 (Usp36) (Drosophila willistoni (Fruit fly)).